The primary structure comprises 122 residues: MARIAGVNIPTAKRVVIALQYIHGIGPKKAEEITEKVGIPAERRVNQLTDAEVLQIRETIDRDYLVEGDLRREVSMNIKRLMDLGCYRGLRHRKQLPVRGQRTHTNARTRKGKAKPIAGKKK.

The segment at 94-122 (KQLPVRGQRTHTNARTRKGKAKPIAGKKK) is disordered.

Belongs to the universal ribosomal protein uS13 family. Part of the 30S ribosomal subunit. Forms a loose heterodimer with protein S19. Forms two bridges to the 50S subunit in the 70S ribosome.

Located at the top of the head of the 30S subunit, it contacts several helices of the 16S rRNA. In the 70S ribosome it contacts the 23S rRNA (bridge B1a) and protein L5 of the 50S subunit (bridge B1b), connecting the 2 subunits; these bridges are implicated in subunit movement. Contacts the tRNAs in the A and P-sites. This Methylorubrum populi (strain ATCC BAA-705 / NCIMB 13946 / BJ001) (Methylobacterium populi) protein is Small ribosomal subunit protein uS13.